Consider the following 221-residue polypeptide: Small ribosomal subunit protein uS3 (221 aa).

A KH type-2 domain is found at 39–107 (LRKFLKDKLK…EVFLSIQEVR (69 aa)).

This sequence belongs to the universal ribosomal protein uS3 family. In terms of assembly, part of the 30S ribosomal subunit. Forms a tight complex with proteins S10 and S14.

Binds the lower part of the 30S subunit head. Binds mRNA in the 70S ribosome, positioning it for translation. This is Small ribosomal subunit protein uS3 from Bdellovibrio bacteriovorus (strain ATCC 15356 / DSM 50701 / NCIMB 9529 / HD100).